The primary structure comprises 101 residues: Small ribosomal subunit protein bS18c (101 aa).

The span at 1–19 shows a compositional bias: basic residues; that stretch reads MDKSKRPFRKSKRSFRKRL. The interval 1 to 23 is disordered; sequence MDKSKRPFRKSKRSFRKRLPPIG.

This sequence belongs to the bacterial ribosomal protein bS18 family. Part of the 30S ribosomal subunit.

It localises to the plastid. The protein localises to the chloroplast. This chain is Small ribosomal subunit protein bS18c, found in Chloranthus spicatus (Chulantree).